A 91-amino-acid polypeptide reads, in one-letter code: Uteroglobin (91 aa).

An N-terminal signal peptide occupies residues 1 to 21 (MKLAITITLAILALCCSPASA).

The protein belongs to the secretoglobin family. In terms of assembly, antiparallel homodimer; disulfide-linked. Interaction with LMBR1L is controversial. In terms of tissue distribution, club cells (nonciliated cells of the surface epithelium of the pulmonary airways). Expressed in lung, uterus, and prostate.

It is found in the secreted. Functionally, binds phosphatidylcholine, phosphatidylinositol, polychlorinated biphenyls (PCB) and weakly progesterone, potent inhibitor of phospholipase A2. The polypeptide is Uteroglobin (SCGB1A1) (Equus caballus (Horse)).